The primary structure comprises 813 residues: Serine/threonine-protein kinase kin-29 (813 aa).

Residues 18–269 form the Protein kinase domain; sequence YDVGRAIGKG…IQNVLAHRWM (252 aa). ATP contacts are provided by residues 24–32 and K47; that span reads IGKGNFATV. Catalysis depends on D140, which acts as the Proton acceptor. A disordered region spans residues 383–412; that stretch reads LSSPDCDSDDSSNSDLCDESPLSSLEPNHK. Residues 388 to 400 show a composition bias toward acidic residues; sequence CDSDDSSNSDLCD.

It belongs to the protein kinase superfamily. CAMK Ser/Thr protein kinase family. SNF1 subfamily. In terms of assembly, interacts with tax-6. The cofactor is Mg(2+). Autophosphorylated. Elevated cAMP levels appears to act via PKA to directly or indirectly phosphorylate multiple sites on kin-29 and inhibit function.

The protein localises to the cytoplasm. Its subcellular location is the nucleus. The catalysed reaction is L-seryl-[protein] + ATP = O-phospho-L-seryl-[protein] + ADP + H(+). It catalyses the reaction L-threonyl-[protein] + ATP = O-phospho-L-threonyl-[protein] + ADP + H(+). Its function is as follows. Regulates chemoreceptor expression by phosphorylating the hda-4 class II histone deacetylase (HDAC) and inhibiting the gene repression functions of hda-4 and the mef-2 transcription factor, enabling the correct sensing and transduction of food signals. Role in determining body size, the dauer decision and serotonin-mediated egg laying. May modulate the Sma/Mab pathway and regulates development in the later larval stages. This Caenorhabditis briggsae protein is Serine/threonine-protein kinase kin-29.